The primary structure comprises 333 residues: D-fructose 1,6-bisphosphatase class 2/sedoheptulose 1,7-bisphosphatase (333 aa).

Mn(2+)-binding residues include Asp-33, Glu-57, Asp-85, and Glu-88. Substrate contacts are provided by residues 88–90 (EGT), Tyr-119, 164–166 (RTR), and 186–188 (DGD). Glu-213 provides a ligand contact to Mn(2+).

The protein belongs to the FBPase class 2 family. In terms of assembly, homotetramer. Requires Mn(2+) as cofactor.

It catalyses the reaction beta-D-fructose 1,6-bisphosphate + H2O = beta-D-fructose 6-phosphate + phosphate. The catalysed reaction is D-sedoheptulose 1,7-bisphosphate + H2O = D-sedoheptulose 7-phosphate + phosphate. It functions in the pathway carbohydrate biosynthesis; Calvin cycle. Functionally, catalyzes the hydrolysis of fructose 1,6-bisphosphate (Fru 1,6-P2) and sedoheptulose 1,7-bisphosphate (Sed 1,7-P2) to fructose 6-phosphate and sedoheptulose 7-phosphate, respectively. This Prochlorococcus marinus (strain MIT 9301) protein is D-fructose 1,6-bisphosphatase class 2/sedoheptulose 1,7-bisphosphatase.